A 251-amino-acid chain; its full sequence is Triosephosphate isomerase (251 aa).

9–11 contacts substrate; sequence NWK. Residue His96 is the Electrophile of the active site. Residue Glu168 is the Proton acceptor of the active site. Substrate-binding positions include Gly174, Ser214, and 235-236; that span reads GG.

Belongs to the triosephosphate isomerase family. Homodimer.

It localises to the cytoplasm. The enzyme catalyses D-glyceraldehyde 3-phosphate = dihydroxyacetone phosphate. It participates in carbohydrate biosynthesis; gluconeogenesis. The protein operates within carbohydrate degradation; glycolysis; D-glyceraldehyde 3-phosphate from glycerone phosphate: step 1/1. In terms of biological role, involved in the gluconeogenesis. Catalyzes stereospecifically the conversion of dihydroxyacetone phosphate (DHAP) to D-glyceraldehyde-3-phosphate (G3P). In Cytophaga hutchinsonii (strain ATCC 33406 / DSM 1761 / CIP 103989 / NBRC 15051 / NCIMB 9469 / D465), this protein is Triosephosphate isomerase.